We begin with the raw amino-acid sequence, 340 residues long: Organic solute transporter subunit alpha (340 aa).

The Extracellular portion of the chain corresponds to 1-48 (MEPGRTQIKLDPRYTADLLEVLKTNYGIPSACFSQPPTAAQLLRALGP). A helical membrane pass occupies residues 49–69 (VELALTSILTLLALGSIAIFL). The Cytoplasmic segment spans residues 70 to 87 (EDAVYLYKNTLCPIKRRT). A helical membrane pass occupies residues 88–108 (LLWKSSAPTVVSVLCCFGLWI). The Extracellular segment spans residues 109–118 (PRSLVLVEMT). The helical transmembrane segment at 119–139 (ITSFYAVCFYLLMLVMVEGFG) threads the bilayer. The Cytoplasmic segment spans residues 140–181 (GKEAVLRTLRDTPMMVHTGPCCCCCPCCPRLLLTRKKLQLLM). A helical membrane pass occupies residues 182–202 (LGPFQYAFLKITLTLVGLFLV). The Extracellular portion of the chain corresponds to 203–218 (PDGIYDPADISEGSTA). Residues 219–239 (LWINTFLGVSTLLALWTLGII) traverse the membrane as a helical segment. Residues 240–255 (SRQARLHLGEQNMGAK) are Cytoplasmic-facing. A helical transmembrane segment spans residues 256–276 (FALFQVLLILTALQPSIFSVL). At 277–294 (ANGGQIACSPPYSSKTRS) the chain is on the extracellular side. Residues 295–317 (QVMNCHLLILETFLMTVLTRMYY) traverse the membrane as a helical segment. The Cytoplasmic segment spans residues 318-340 (RRKDHKVGYETFSSPDLDLNLKA). Position 330 is a phosphoserine (Ser330).

The protein belongs to the OST-alpha family. As to quaternary structure, interacts with SLC51B. The Ost-alpha/Ost-beta complex is a heterodimer composed of alpha (SLC51A) and beta (SLC51B) subunit. In terms of tissue distribution, widely expressed with a high expression in ileum. Expressed in testis, colon, liver, small intestine, kidney, ovary and adrenal gland; and at low levels in heart, lung, brain, pituitary, thyroid gland, uterus, prostate, mammary gland and fat.

The protein resides in the cell membrane. It is found in the endoplasmic reticulum membrane. The catalysed reaction is taurocholate(out) = taurocholate(in). It catalyses the reaction estrone 3-sulfate(out) = estrone 3-sulfate(in). It carries out the reaction dehydroepiandrosterone 3-sulfate(out) = dehydroepiandrosterone 3-sulfate(in). The enzyme catalyses tauroursodeoxycholate(out) = tauroursodeoxycholate(in). The catalysed reaction is glycoursodeoxycholate(out) = glycoursodeoxycholate(in). It catalyses the reaction glycocholate(out) = glycocholate(in). It carries out the reaction taurochenodeoxycholate(out) = taurochenodeoxycholate(in). The enzyme catalyses glycochenodeoxycholate(out) = glycochenodeoxycholate(in). The catalysed reaction is taurodeoxycholate(out) = taurodeoxycholate(in). It catalyses the reaction glycodeoxycholate(out) = glycodeoxycholate(in). It carries out the reaction prostaglandin E2(out) = prostaglandin E2(in). Its function is as follows. Essential component of the Ost-alpha/Ost-beta complex, a heterodimer that acts as the intestinal basolateral transporter responsible for bile acid export from enterocytes into portal blood. Efficiently transports the major species of bile acids (taurocholate). Taurine conjugates are transported more efficiently across the basolateral membrane than glycine-conjugated bile acids. Can also transport steroids such as estrone 3-sulfate and dehydroepiandrosterone 3-sulfate, therefore playing a role in the enterohepatic circulation of sterols. Able to transport eicosanoids such as prostaglandin E2. This is Organic solute transporter subunit alpha (SLC51A) from Homo sapiens (Human).